The sequence spans 217 residues: MQDTTLHIRHLGQQDYESVWHAMQHYTDTRNSDSPDELWIVEHPPVFTQGQAGKSEHILNPGDIPVIQVDRGGQVTYHGPGQLVVYPLLDIKRSKIGVRQLVTHIEQSIIDMLAKYDINAYAKADAPGVYVDERKVASLGLRIRKGCSFHGLALNVDMDLAPFRRINPCGYAGLEMVQCKELGGPQTVIEAGDQLIITLSQLLGYQQLVHHQGLAAS.

The BPL/LPL catalytic domain occupies 32 to 207 (SDSPDELWIV…TLSQLLGYQQ (176 aa)). Residues 71-78 (RGGQVTYH), 138-140 (SLG), and 151-153 (GLA) each bind substrate. The active-site Acyl-thioester intermediate is Cys169.

This sequence belongs to the LipB family.

It localises to the cytoplasm. The catalysed reaction is octanoyl-[ACP] + L-lysyl-[protein] = N(6)-octanoyl-L-lysyl-[protein] + holo-[ACP] + H(+). The protein operates within protein modification; protein lipoylation via endogenous pathway; protein N(6)-(lipoyl)lysine from octanoyl-[acyl-carrier-protein]: step 1/2. Functionally, catalyzes the transfer of endogenously produced octanoic acid from octanoyl-acyl-carrier-protein onto the lipoyl domains of lipoate-dependent enzymes. Lipoyl-ACP can also act as a substrate although octanoyl-ACP is likely to be the physiological substrate. The polypeptide is Octanoyltransferase (Shewanella sp. (strain MR-7)).